A 532-amino-acid chain; its full sequence is O-phosphoserine--tRNA(Cys) ligase (532 aa).

Substrate-binding positions include 188 to 190, 233 to 235, 275 to 276, and Asn327; these read HMT, SAS, and YY.

Belongs to the class-II aminoacyl-tRNA synthetase family. O-phosphoseryl-tRNA(Cys) synthetase subfamily. In terms of assembly, homotetramer. Interacts with SepCysS.

It carries out the reaction tRNA(Cys) + O-phospho-L-serine + ATP = O-phospho-L-seryl-tRNA(Cys) + AMP + diphosphate. Its function is as follows. Catalyzes the attachment of O-phosphoserine (Sep) to tRNA(Cys). This Methanocella arvoryzae (strain DSM 22066 / NBRC 105507 / MRE50) protein is O-phosphoserine--tRNA(Cys) ligase.